The chain runs to 313 residues: Protein FixB (313 aa).

Residue 255–283 (LYLAVGISGQIQHMVGANASQTIFAINKD) coordinates FAD.

It belongs to the ETF alpha-subunit/FixB family. In terms of assembly, heterodimer of FixA and FixB.

Its pathway is amine and polyamine metabolism; carnitine metabolism. Functionally, required for anaerobic carnitine reduction. May bring reductant to CaiA. In Escherichia coli (strain 55989 / EAEC), this protein is Protein FixB.